Here is a 170-residue protein sequence, read N- to C-terminus: ATP synthase subunit b (170 aa).

A helical transmembrane segment spans residues 11-31; that stretch reads AFTFGDAFFTLFAFAILLVLI.

This sequence belongs to the ATPase B chain family. As to quaternary structure, F-type ATPases have 2 components, F(1) - the catalytic core - and F(0) - the membrane proton channel. F(1) has five subunits: alpha(3), beta(3), gamma(1), delta(1), epsilon(1). F(0) has three main subunits: a(1), b(2) and c(10-14). The alpha and beta chains form an alternating ring which encloses part of the gamma chain. F(1) is attached to F(0) by a central stalk formed by the gamma and epsilon chains, while a peripheral stalk is formed by the delta and b chains.

It is found in the cell membrane. In terms of biological role, f(1)F(0) ATP synthase produces ATP from ADP in the presence of a proton or sodium gradient. F-type ATPases consist of two structural domains, F(1) containing the extramembraneous catalytic core and F(0) containing the membrane proton channel, linked together by a central stalk and a peripheral stalk. During catalysis, ATP synthesis in the catalytic domain of F(1) is coupled via a rotary mechanism of the central stalk subunits to proton translocation. Its function is as follows. Component of the F(0) channel, it forms part of the peripheral stalk, linking F(1) to F(0). This is ATP synthase subunit b from Listeria welshimeri serovar 6b (strain ATCC 35897 / DSM 20650 / CCUG 15529 / CIP 8149 / NCTC 11857 / SLCC 5334 / V8).